Consider the following 632-residue polypeptide: DNA gyrase subunit B (632 aa).

Positions 419 to 533 (RELFIVEGES…SGYLYIAQPP (115 aa)) constitute a Toprim domain. Mg(2+)-binding residues include E425, D498, and D500.

This sequence belongs to the type II topoisomerase GyrB family. In terms of assembly, heterotetramer, composed of two GyrA and two GyrB chains. In the heterotetramer, GyrA contains the active site tyrosine that forms a transient covalent intermediate with DNA, while GyrB binds cofactors and catalyzes ATP hydrolysis. Requires Mg(2+) as cofactor. Mn(2+) is required as a cofactor. Ca(2+) serves as cofactor.

Its subcellular location is the cytoplasm. The enzyme catalyses ATP-dependent breakage, passage and rejoining of double-stranded DNA.. Functionally, a type II topoisomerase that negatively supercoils closed circular double-stranded (ds) DNA in an ATP-dependent manner to modulate DNA topology and maintain chromosomes in an underwound state. Negative supercoiling favors strand separation, and DNA replication, transcription, recombination and repair, all of which involve strand separation. Also able to catalyze the interconversion of other topological isomers of dsDNA rings, including catenanes and knotted rings. Type II topoisomerases break and join 2 DNA strands simultaneously in an ATP-dependent manner. This is DNA gyrase subunit B from Archaeoglobus fulgidus (strain ATCC 49558 / DSM 4304 / JCM 9628 / NBRC 100126 / VC-16).